The following is a 433-amino-acid chain: ATP-dependent protease ATPase subunit HslU (433 aa).

ATP-binding positions include valine 18, 60-65 (GVGKTE), aspartate 246, glutamate 311, and arginine 383.

Belongs to the ClpX chaperone family. HslU subfamily. As to quaternary structure, a double ring-shaped homohexamer of HslV is capped on each side by a ring-shaped HslU homohexamer. The assembly of the HslU/HslV complex is dependent on binding of ATP.

The protein localises to the cytoplasm. Its function is as follows. ATPase subunit of a proteasome-like degradation complex; this subunit has chaperone activity. The binding of ATP and its subsequent hydrolysis by HslU are essential for unfolding of protein substrates subsequently hydrolyzed by HslV. HslU recognizes the N-terminal part of its protein substrates and unfolds these before they are guided to HslV for hydrolysis. The protein is ATP-dependent protease ATPase subunit HslU of Rhodopseudomonas palustris (strain TIE-1).